The chain runs to 892 residues: DNA ligase (892 aa).

Positions 1–23 (MTMTNRDDSEQLAWDFDAPESDG) are disordered. Residues 99 to 103 (DAAYD), 148 to 149 (SL), and Glu182 contribute to the NAD(+) site. The active-site N6-AMP-lysine intermediate is Lys184. The NAD(+) site is built by Arg205, Glu244, Lys369, and Lys393. Zn(2+) contacts are provided by Cys490, Cys493, Cys509, and Cys515. One can recognise a BRCT domain in the interval 810-892 (GLPQTLAGKT…KQLLDTGTVE (83 aa)).

It belongs to the NAD-dependent DNA ligase family. LigA subfamily. It depends on Mg(2+) as a cofactor. Mn(2+) serves as cofactor.

The enzyme catalyses NAD(+) + (deoxyribonucleotide)n-3'-hydroxyl + 5'-phospho-(deoxyribonucleotide)m = (deoxyribonucleotide)n+m + AMP + beta-nicotinamide D-nucleotide.. Functionally, DNA ligase that catalyzes the formation of phosphodiester linkages between 5'-phosphoryl and 3'-hydroxyl groups in double-stranded DNA using NAD as a coenzyme and as the energy source for the reaction. It is essential for DNA replication and repair of damaged DNA. The sequence is that of DNA ligase from Bifidobacterium adolescentis (strain ATCC 15703 / DSM 20083 / NCTC 11814 / E194a).